Here is a 192-residue protein sequence, read N- to C-terminus: dITP/XTP pyrophosphatase (192 aa).

12–17 (TNNENK) serves as a coordination point for substrate. The Mg(2+) site is built by Glu41 and Asp70. Asp70 functions as the Proton acceptor in the catalytic mechanism. Residues Ser71, 145–148 (FGFD), Lys168, and 173–174 (HR) contribute to the substrate site.

Belongs to the HAM1 NTPase family. As to quaternary structure, homodimer. The cofactor is Mg(2+).

The catalysed reaction is XTP + H2O = XMP + diphosphate + H(+). It catalyses the reaction dITP + H2O = dIMP + diphosphate + H(+). It carries out the reaction ITP + H2O = IMP + diphosphate + H(+). In terms of biological role, pyrophosphatase that catalyzes the hydrolysis of nucleoside triphosphates to their monophosphate derivatives, with a high preference for the non-canonical purine nucleotides XTP (xanthosine triphosphate), dITP (deoxyinosine triphosphate) and ITP. Seems to function as a house-cleaning enzyme that removes non-canonical purine nucleotides from the nucleotide pool, thus preventing their incorporation into DNA/RNA and avoiding chromosomal lesions. In Saccharolobus solfataricus (strain ATCC 35092 / DSM 1617 / JCM 11322 / P2) (Sulfolobus solfataricus), this protein is dITP/XTP pyrophosphatase.